The primary structure comprises 438 residues: GDP-mannose 6-dehydrogenase (438 aa).

Positions 10, 11, 30, 35, 86, and 124 each coordinate NAD(+). GDP-alpha-D-mannuronate-binding residues include glutamate 161, lysine 210, asparagine 214, histidine 217, asparagine 225, tyrosine 256, tyrosine 257, arginine 259, phenylalanine 262, and glycine 265. Residue cysteine 268 is part of the active site. Residue lysine 271 coordinates NAD(+). A GDP-alpha-D-mannuronate-binding site is contributed by lysine 324. Arginine 331 contributes to the NAD(+) binding site.

Belongs to the UDP-glucose/GDP-mannose dehydrogenase family.

It carries out the reaction GDP-alpha-D-mannose + 2 NAD(+) + H2O = GDP-alpha-D-mannuronate + 2 NADH + 3 H(+). It functions in the pathway glycan biosynthesis; alginate biosynthesis. In terms of biological role, catalyzes the oxidation of guanosine diphospho-D-mannose (GDP-D-mannose) to GDP-D-mannuronic acid, a precursor for alginate polymerization. The alginate layer causes a mucoid phenotype and provides a protective barrier against host immune defenses and antibiotics. This is GDP-mannose 6-dehydrogenase (algD) from Pseudomonas putida (strain ATCC 47054 / DSM 6125 / CFBP 8728 / NCIMB 11950 / KT2440).